The following is a 97-amino-acid chain: uncharacterized protein (97 aa).

This is an uncharacterized protein from Emericella nidulans (Aspergillus nidulans).